The following is a 341-amino-acid chain: MQNLTVALDAMGGDFGPRVTVPAAVQALSYFPELKVILIGDRNAITSQLSSLGRMPDSRLSIQHCDRVISNSEKPSLALRNSQGSSMRAAIDLVAESQADACVSGGNTGALMALSRFRLKLLPGIDRPALVSALPTASGNRTWMLDLGANVSSDADSLFQFAVMGSALAEQHLGRVPRVAILNIGAEEIKGNDLVKRCAEMLSNTQSVNFIGYIEGNQLLQDAADVVVCDGFVGNVCLKTCEGTAQLFIDKLKTRMMASTIKGWIARMLFSELFTELKTLNPDQYNGASLLGLRGIVIKSHGSADVSAVVNAIGEAVHEVKRQVPSRISDRLEAVLLERHY.

This sequence belongs to the PlsX family. Homodimer. Probably interacts with PlsY.

Its subcellular location is the cytoplasm. The catalysed reaction is a fatty acyl-[ACP] + phosphate = an acyl phosphate + holo-[ACP]. Its pathway is lipid metabolism; phospholipid metabolism. Catalyzes the reversible formation of acyl-phosphate (acyl-PO(4)) from acyl-[acyl-carrier-protein] (acyl-ACP). This enzyme utilizes acyl-ACP as fatty acyl donor, but not acyl-CoA. This is Phosphate acyltransferase from Vibrio atlanticus (strain LGP32) (Vibrio splendidus (strain Mel32)).